The sequence spans 97 residues: YcgL domain-containing protein CPS_3517 (97 aa).

A YcgL domain is found at 1–85 (MLCAIYKSAR…PQEDLLKEHK (85 aa)).

In Colwellia psychrerythraea (strain 34H / ATCC BAA-681) (Vibrio psychroerythus), this protein is YcgL domain-containing protein CPS_3517.